Reading from the N-terminus, the 452-residue chain is Cobyrinate a,c-diamide synthase (452 aa).

The region spanning 248-441 (RVAYALDAAF…LHIHFYQNLA (194 aa)) is the GATase cobBQ-type domain. Cys330 acts as the Nucleophile in catalysis.

The protein belongs to the CobB/CbiA family. Mg(2+) is required as a cofactor.

It carries out the reaction cob(II)yrinate + 2 L-glutamine + 2 ATP + 2 H2O = cob(II)yrinate a,c diamide + 2 L-glutamate + 2 ADP + 2 phosphate + 2 H(+). Its pathway is cofactor biosynthesis; adenosylcobalamin biosynthesis; cob(II)yrinate a,c-diamide from sirohydrochlorin (anaerobic route): step 10/10. Catalyzes the ATP-dependent amidation of the two carboxylate groups at positions a and c of cobyrinate, using either L-glutamine or ammonia as the nitrogen source. This Listeria monocytogenes serovar 1/2a (strain ATCC BAA-679 / EGD-e) protein is Cobyrinate a,c-diamide synthase.